The chain runs to 25 residues: Histone H4 (25 aa).

The span at 1 to 14 shows a compositional bias: gly residues; the sequence is MSGRGKGGKGLGKG. Residues 1–25 form a disordered region; the sequence is MSGRGKGGKGLGKGGAKRHRKVLRD. An N-acetylserine modification is found at Ser2. N6-acetyllysine occurs at positions 6, 9, 13, 17, and 21. Over residues 15–25 the composition is skewed to basic residues; the sequence is GAKRHRKVLRD. A DNA-binding region spans residues 17-21; that stretch reads KRHRK.

The protein belongs to the histone H4 family. In terms of assembly, the nucleosome is a histone octamer containing two molecules each of H2A, H2B, H3 and H4 assembled in one H3-H4 heterotetramer and two H2A-H2B heterodimers. The octamer wraps approximately 147 bp of DNA.

It localises to the nucleus. The protein resides in the chromosome. Its function is as follows. Core component of nucleosome. Nucleosomes wrap and compact DNA into chromatin, limiting DNA accessibility to the cellular machineries which require DNA as a template. Histones thereby play a central role in transcription regulation, DNA repair, DNA replication and chromosomal stability. DNA accessibility is regulated via a complex set of post-translational modifications of histones, also called histone code, and nucleosome remodeling. The sequence is that of Histone H4 from Medicago sativa (Alfalfa).